Here is a 73-residue protein sequence, read N- to C-terminus: Large ribosomal subunit protein bL31 (73 aa).

The Zn(2+) site is built by Cys16, Cys18, Cys37, and Cys40.

Belongs to the bacterial ribosomal protein bL31 family. Type A subfamily. Part of the 50S ribosomal subunit. The cofactor is Zn(2+).

Binds the 23S rRNA. The sequence is that of Large ribosomal subunit protein bL31 from Pseudomonas syringae pv. syringae (strain B728a).